A 1081-amino-acid chain; its full sequence is WD repeat-containing protein 64 (1081 aa).

14 WD repeats span residues D102–K152, G153–Q198, E199–S265, K266–N314, L315–T356, K357–L400, L401–I444, Q445–L488, Q489–G532, Q533–E631, R632–S740, K741–L803, L804–F857, and K858–H895. The span at C726 to Q745 shows a compositional bias: low complexity. The disordered stretch occupies residues C726–T757. Residues S746 to Q756 show a composition bias toward basic and acidic residues. Residues D1036–S1060 are disordered. The span at G1043 to S1060 shows a compositional bias: basic residues.

The sequence is that of WD repeat-containing protein 64 (WDR64) from Homo sapiens (Human).